The chain runs to 439 residues: Chromosomal replication initiator protein DnaA (439 aa).

The interval 1 to 75 is domain I, interacts with DnaA modulators; sequence MESWSRCLER…GIREVVLAIG (75 aa). The domain II stretch occupies residues 75–101; it reads GSRPKTTELPVPVDTTGRLSSTVPFNG. Residues 102–319 form a domain III, AAA+ region region; sequence NLDTHYNFDN…GALNTLVARA (218 aa). The ATP site is built by glycine 147, glycine 149, lysine 150, and threonine 151. Positions 320-439 are domain IV, binds dsDNA; that stretch reads NFTGRAVTIE…WDKLMRKFSE (120 aa).

The protein belongs to the DnaA family. As to quaternary structure, oligomerizes as a right-handed, spiral filament on DNA at oriC.

The protein resides in the cytoplasm. Plays an essential role in the initiation and regulation of chromosomal replication. ATP-DnaA binds to the origin of replication (oriC) to initiate formation of the DNA replication initiation complex once per cell cycle. Binds the DnaA box (a 9 base pair repeat at the origin) and separates the double-stranded (ds)DNA. Forms a right-handed helical filament on oriC DNA; dsDNA binds to the exterior of the filament while single-stranded (ss)DNA is stabiized in the filament's interior. The ATP-DnaA-oriC complex binds and stabilizes one strand of the AT-rich DNA unwinding element (DUE), permitting loading of DNA polymerase. After initiation quickly degrades to an ADP-DnaA complex that is not apt for DNA replication. Binds acidic phospholipids. This is Chromosomal replication initiator protein DnaA from Xylella fastidiosa (strain 9a5c).